A 373-amino-acid chain; its full sequence is mRNA export factor rae-1 (373 aa).

Met-1 carries the N-acetylmethionine modification. WD repeat units lie at residues 40–82, 87–126, 128–169, and 276–315; these read APED…TFEG, NIPAPILDIAWIEDSSKIFIACADKEARLWDLASNQVAVV, THDG…NQTQ, and QEIYAVNDICFHPQHGTLVTIGSDGRYSMWDKDARTKLKT.

Belongs to the WD repeat rae1 family. As to quaternary structure, the nuclear pore complex (NPC) constitutes the exclusive means of nucleocytoplasmic transport. NPCs allow the passive diffusion of ions and small molecules and the active, nuclear transport receptor-mediated bidirectional transport of macromolecules such as proteins, RNAs, ribonucleoparticles (RNPs), and ribosomal subunits across the nuclear envelope. Interacts with rpm-1. Expressed along the ventral and dorsal nerve cords.

The protein resides in the nucleus. It localises to the nuclear pore complex. The protein localises to the cell projection. It is found in the axon. Its subcellular location is the synapse. Functionally, functions as a component of the nuclear pore complex (NPC). NPC components, collectively referred to as nucleoporins (NUPs), can play the role of both NPC structural components and of docking or interaction partners for transiently associated nuclear transport factors. It is specifically important for nuclear mRNA export. Has a role in neuronal development, where it acts downstream of rpm-1 to control axon termination and synapse formation in anterior lateral microtubule (ALM) and posterior lateral microtubule (PLM) mechanosensory neurons. This chain is mRNA export factor rae-1, found in Caenorhabditis elegans.